The sequence spans 853 residues: Deubiquitinase otu (853 aa).

A disordered region spans residues 1–20 (MDMQVQRPITSGSRQAPDPY). Residues 29–150 (LYRKHTARDA…ENHFDSVYDV (122 aa)) enclose the OTU domain. Asp-37 is a catalytic residue. Ser-40 functions as the Nucleophile in the catalytic mechanism. His-143 is a catalytic residue. One can recognise a Tudor domain in the interval 336–396 (NFKVGAKCKV…HPLPPDEYRP (61 aa)). Residues 396–853 (PWSLPFRYHR…AAVYAATRHH (458 aa)) form an LC domain region. Residues 460–470 (QDDEQRDHNDP) show a composition bias toward basic and acidic residues. Disordered stretches follow at residues 460–531 (QDDE…YVPM), 681–704 (AVESTPPPSPEVANATEQSPLEKS), 732–794 (GPAA…AAQG), and 817–853 (NMDPSAQPQQQQPATLQPAPLSVQSQPAAVYAATRHH). A compositionally biased stretch (low complexity) spans 499–517 (SRVQPQNSSSSQNQEVSGS). The segment covering 747 to 758 (NGSQFSFYTTPS) has biased composition (polar residues). The span at 769–778 (LLQPPPPPPI) shows a compositional bias: pro residues. Composition is skewed to low complexity over residues 783 to 794 (AGPPQLGGAAQG) and 820 to 838 (PSAQPQQQQPATLQPAPLS).

As to quaternary structure, self aggregates, forming amyloid-like fibrillar helical structures; protein aggregation is mediated by the C-terminal LC domain, is enhanced by RNA binding and is essential for deubiquitinase activity. Interacts (via OTU domain) with bam (via C-terminus); the interaction enhances otu aggregation and deubiquitinase activity. Together with bam interacts with CycA/cyclin-A; the interaction stabilizes CycA by promoting its deubiquitination. Together with bam interacts with Traf6. Interacts with Hrb27C; the interaction is RNA-independent. Associates (via N-terminus) with mRNP complexes; the interaction is weak. In terms of tissue distribution, expressed at high levels in the ovary, at low levels in the brain and fat body, and at moderate levels in the gut.

It localises to the cytoplasm. The protein resides in the cell cortex. Its subcellular location is the perinuclear region. Activated by protein aggregation, which is mediated by the LC domain and enhanced by RNA binding. Catalytic component of a deubiquitinase complex consisting of bam and otu. The complex deubiquitinates K63-linked polyubiquitinated proteins; this antagonizes the ubiquitination activity of Traf6 and regulates the IMD immune signaling pathway. Otu-bam deubiquitinase activity is regulated by Traf6 dependent immune signaling regulation of bam expression levels; this forms a feedback loop that regulates the IMD immune signaling pathway and balances gut immune activity during aging. The complex deubiquitinates and stabilizes CycA/cyclin-A to regulate CycA-dependent differentiation. Involved in grk mRNA localization to the dorsal anterior region of the oocyte required for dorsal-ventral axis determination; may function as a ribonuclear protein complex together with sqd and Hrb27C. May regulate actin cytoskeleton organization in differentiating cystocytes during fusome maturation; required for efficient nurse cell cytoplasmic dumping during oogenesis. Essential for female fertility; involved in germ cell proliferation and germ cell differentiation. In terms of biological role, involved in the early stages of germ cell proliferation and differentiation during oogenesis. Required for polytene chromosome dispersal in nurse cells during oogenesis. Functionally, involved in the later stages of germ cell proliferation and differentiation during oogenesis. This chain is Deubiquitinase otu, found in Drosophila melanogaster (Fruit fly).